The sequence spans 389 residues: Ribosomal RNA large subunit methyltransferase M (389 aa).

Over residues 1 to 13 (MIGNARMSQKYPT) the composition is skewed to polar residues. Positions 1–24 (MIGNARMSQKYPTSSSRKRSPLSS) are disordered. S-adenosyl-L-methionine-binding positions include serine 214, 247-250 (APGG), aspartate 266, aspartate 286, and aspartate 302. Lysine 331 serves as the catalytic Proton acceptor.

Belongs to the class I-like SAM-binding methyltransferase superfamily. RNA methyltransferase RlmE family. RlmM subfamily. As to quaternary structure, monomer.

Its subcellular location is the cytoplasm. The catalysed reaction is cytidine(2498) in 23S rRNA + S-adenosyl-L-methionine = 2'-O-methylcytidine(2498) in 23S rRNA + S-adenosyl-L-homocysteine + H(+). In terms of biological role, catalyzes the 2'-O-methylation at nucleotide C2498 in 23S rRNA. The sequence is that of Ribosomal RNA large subunit methyltransferase M from Hahella chejuensis (strain KCTC 2396).